The following is a 607-amino-acid chain: Serum albumin (607 aa).

Positions 1-16 are cleaved as a signal peptide; sequence MKWTILTALLIISAES. The propeptide occupies 17-20; sequence KNLY. Albumin domains lie at 19-209, 210-401, and 403-600; these read LYKR…TQLK, KALH…HVLA, and AIKE…ILIE. Residue H27 coordinates Cu cation. Cystine bridges form between C77–C86, C99–C115, C114–C125, C147–C192, C191–C200, C223–C269, C268–C276, C288–C302, C301–C312, C339–C384, C383–C392, C415–C461, C460–C471, C484–C500, C499–C510, C537–C582, and C581–C590. Zn(2+) is bound by residues H270 and D272. Ca(2+)-binding residues include D272 and E275.

The protein belongs to the ALB/AFP/VDB family. Plasma. In the skin, widely distributed around the membranes of epithelial layer cells and within the stratum spongiosum of the dermis (at protein level).

It localises to the secreted. Its function is as follows. Serum albumin, the main protein of plasma, has a good binding capacity for water, Ca(2+), Na(+), K(+), fatty acids, hormones, bilirubin and drugs. Its main function is the regulation of the colloidal osmotic pressure of blood. Potent inhibitor of trypsin but has no inhibitory effect on thrombin, chymotrypsin, elastase and subtilisin. The sequence is that of Serum albumin from Bombina maxima (Giant fire-bellied toad).